Consider the following 321-residue polypeptide: Reticulon-2 (321 aa).

2 disordered regions span residues 1 to 36 (MGHV…SPVT) and 65 to 85 (PPVR…PREE). In terms of domain architecture, Reticulon spans 134–321 (VKDLLYWRDI…TVKKPPAKQK (188 aa)). Helical transmembrane passes span 163 to 183 (FSVI…TLTL) and 250 to 270 (FLVI…ITVL).

Its subcellular location is the endoplasmic reticulum membrane. It is found in the sarcoplasmic reticulum membrane. The protein resides in the cell membrane. The protein localises to the sarcolemma. It localises to the T-tubule. Its subcellular location is the cytoplasm. It is found in the myofibril. The protein resides in the sarcomere. The protein localises to the z line. It localises to the cytoskeleton. Functionally, inhibits amyloid precursor protein processing, probably by blocking BACE1 activity. Enhances trafficking of the glutamate transporter SLC1A1/EAAC1 from the endoplasmic reticulum to the cell surface. Plays a role in the translocation of SLC2A4/GLUT4 from intracellular membranes to the cell membrane which facilitates the uptake of glucose into the cell. This is Reticulon-2 from Xenopus tropicalis (Western clawed frog).